The sequence spans 253 residues: Dihydroanticapsin 7-dehydrogenase (253 aa).

Residue 9 to 31 participates in NAD(+) binding; it reads LITGGASGIGYAAVQAFLNQQAN. Residue Ser-139 coordinates substrate. Tyr-152 (proton acceptor) is an active-site residue.

This sequence belongs to the short-chain dehydrogenases/reductases (SDR) family.

The catalysed reaction is L-dihydroanticapsin + NAD(+) = L-anticapsin + NADH + H(+). It participates in antibiotic biosynthesis; bacilysin biosynthesis. Functionally, part of the bacABCDEFG operon responsible for the biosynthesis of bacilysin, an irreversible inactivator of the glutaminase domain of glucosamine synthetase. Catalyzes the dehydrogenation of the C7-hydroxyl group in the 4S-tetrahydrotyrosine (4S-H4Tyr) to yield anticapsin (epoxycyclohexanonyl-Ala). This is Dihydroanticapsin 7-dehydrogenase from Bacillus subtilis.